A 397-amino-acid polypeptide reads, in one-letter code: Gastric triacylglycerol lipase (397 aa).

An N-terminal signal peptide occupies residues 1 to 19 (MWWLLVTVCFIHMSGNAFC). The N-linked (GlcNAc...) asparagine glycan is linked to N33. Residues 77–376 (PVVFLQHGLL…PNYNHLDFIW (300 aa)) form the AB hydrolase-1 domain. The active-site Nucleophile is S171. The cysteines at positions 245 and 254 are disulfide-linked. N-linked (GlcNAc...) asparagine glycans are attached at residues N270 and N326. Catalysis depends on charge relay system residues D342 and H371.

Belongs to the AB hydrolase superfamily. Lipase family.

It localises to the secreted. It catalyses the reaction a triacylglycerol + H2O = a diacylglycerol + a fatty acid + H(+). The catalysed reaction is 1,2,3-tri-(9Z-octadecenoyl)-glycerol + H2O = 1,2-di-(9Z-octadecenoyl)-sn-glycerol + (9Z)-octadecenoate + H(+). It carries out the reaction 1,2,3-trioctanoylglycerol + H2O = 1,2-dioctanoyl-sn-glycerol + octanoate + H(+). With respect to regulation, inhibited by diethylp-nitrophenyl phosphate but not inhibited by thiol reagents 5,5'-dithiobis(2-nitrobenzoic acid) or 4,4'-dithiopyridine. Catalyzes the hydrolysis of triacylglycerols to yield free fatty acids, diacylglycerol, monoacylglycerol, and glycerol. Shows a preferential hydrolysis at the sn-3 position of triacylglycerol. The protein is Gastric triacylglycerol lipase (LIPF) of Bos taurus (Bovine).